The sequence spans 393 residues: Chorismate synthase (393 aa).

NADP(+)-binding residues include arginine 40 and arginine 46. Residues 129-131, 249-250, glycine 301, 316-320, and arginine 342 contribute to the FMN site; these read RSS, QA, and KPIPT.

This sequence belongs to the chorismate synthase family. As to quaternary structure, homotetramer. FMNH2 is required as a cofactor.

The enzyme catalyses 5-O-(1-carboxyvinyl)-3-phosphoshikimate = chorismate + phosphate. It functions in the pathway metabolic intermediate biosynthesis; chorismate biosynthesis; chorismate from D-erythrose 4-phosphate and phosphoenolpyruvate: step 7/7. Catalyzes the anti-1,4-elimination of the C-3 phosphate and the C-6 proR hydrogen from 5-enolpyruvylshikimate-3-phosphate (EPSP) to yield chorismate, which is the branch point compound that serves as the starting substrate for the three terminal pathways of aromatic amino acid biosynthesis. This reaction introduces a second double bond into the aromatic ring system. The polypeptide is Chorismate synthase (Pelobacter propionicus (strain DSM 2379 / NBRC 103807 / OttBd1)).